The primary structure comprises 310 residues: GPN-loop GTPase 2 (310 aa).

The residue at position 2 (A2) is an N-acetylalanine. GTP is bound at residue 19–24 (GSGKTT). The short motif at 76–78 (GPN) is the Gly-Pro-Asn (GPN)-loop; involved in dimer interface element. Position 178–181 (178–181 (SKMD)) interacts with GTP.

Belongs to the GPN-loop GTPase family. In terms of assembly, heterodimers with GPN1 or GPN3. Binds to RNA polymerase II (RNAPII).

Its function is as follows. Small GTPase required for proper localization of RNA polymerase II and III (RNAPII and RNAPIII). May act at an RNAP assembly step prior to nuclear import. The protein is GPN-loop GTPase 2 of Rattus norvegicus (Rat).